A 583-amino-acid chain; its full sequence is 2-succinyl-5-enolpyruvyl-6-hydroxy-3-cyclohexene-1-carboxylate synthase (583 aa).

This sequence belongs to the TPP enzyme family. MenD subfamily. Homodimer. The cofactor is Mg(2+). Mn(2+) is required as a cofactor. Requires thiamine diphosphate as cofactor.

The catalysed reaction is isochorismate + 2-oxoglutarate + H(+) = 5-enolpyruvoyl-6-hydroxy-2-succinyl-cyclohex-3-ene-1-carboxylate + CO2. It functions in the pathway quinol/quinone metabolism; 1,4-dihydroxy-2-naphthoate biosynthesis; 1,4-dihydroxy-2-naphthoate from chorismate: step 2/7. The protein operates within cofactor biosynthesis; phylloquinone biosynthesis. Functionally, catalyzes the thiamine diphosphate-dependent decarboxylation of 2-oxoglutarate and the subsequent addition of the resulting succinic semialdehyde-thiamine pyrophosphate anion to isochorismate to yield 2-succinyl-5-enolpyruvyl-6-hydroxy-3-cyclohexene-1-carboxylate (SEPHCHC). This is 2-succinyl-5-enolpyruvyl-6-hydroxy-3-cyclohexene-1-carboxylate synthase from Trichormus variabilis (strain ATCC 29413 / PCC 7937) (Anabaena variabilis).